The chain runs to 441 residues: Protein kinase C and casein kinase substrate in neurons protein 1 (441 aa).

A phosphoserine mark is found at Ser2 and Ser76. One can recognise an F-BAR domain in the interval 10-280 (EEITDSFWEV…AIRGADAQED (271 aa)). A coiled-coil region spans residues 23–272 (KRTVKRIDDG…HVYRELEQAI (250 aa)). Thr181 is subject to Phosphothreonine. The segment at 297–380 (PQFEEWNPDL…ANGGANPFED (84 aa)) is disordered. A compositionally biased stretch (basic and acidic residues) spans 311-321 (AKKEKQPKKAE). Residues 324 to 355 (TLSNATGAVESTSQAGDRGSVSSYDRGQTYAT) are compositionally biased toward polar residues. A phosphoserine mark is found at Ser343, Ser345, Ser346, Ser358, and Ser362. Residues 382-441 (AKGVRVRALYDYDGQEQDELSFKAGDELTKLGEEDEQGWCRGRLDSGQLGLYPANYVEAI) enclose the SH3 domain. Tyr391 carries the post-translational modification Phosphotyrosine. Ser402 and Ser427 each carry phosphoserine.

This sequence belongs to the PACSIN family. Homodimer. May form heterooligomers with other PACSINs. Interacts with both COBL and DBNL. Identified in a complex composed of COBL, PACSIN1 and WASL. Interacts with EHD3. Interacts (via SH3 domain) with SYNJ1 and WASL. Interacts (via SH3 domain) with DNM1; the interaction is reduced by DNM1 phosphorylation. Interacts with DNM2 and DNM3. Interacts with MAPT. Interacts with EHD1. Interacts with TRPV4. Post-translationally, phosphorylated by casein kinase 2 (CK2) and protein kinase C (PKC). In terms of tissue distribution, highly expressed in brain. Detected in hippocampus and dorsal root ganglion neurons. Detected in rod photoreceptor terminals in the outer plexiform layer of the retina (at protein level). In CNS neurons, high levels in the pyramidal cells of the hippocampus, Purkinje cells of the cerebellum and large neurons of the cortex and brain stem.

It localises to the cytoplasm. It is found in the cell projection. Its subcellular location is the synapse. The protein localises to the synaptosome. The protein resides in the ruffle membrane. It localises to the membrane. It is found in the cytoplasmic vesicle membrane. Its subcellular location is the cytosol. The protein localises to the cell membrane. Its function is as follows. Binds to membranes via its F-BAR domain and mediates membrane tubulation. Plays a role in the reorganization of the microtubule cytoskeleton via its interaction with MAPT; this decreases microtubule stability and inhibits MAPT-induced microtubule polymerization. Plays a role in cellular transport processes by recruiting DNM1, DNM2 and DNM3 to membranes. Plays a role in the reorganization of the actin cytoskeleton and in neuron morphogenesis via its interaction with COBL and WASL, and by recruiting COBL to the cell cortex. Plays a role in the regulation of neurite formation, neurite branching and the regulation of neurite length. Required for normal synaptic vesicle endocytosis; this process retrieves previously released neurotransmitters to accommodate multiple cycles of neurotransmission. Required for normal excitatory and inhibitory synaptic transmission. This is Protein kinase C and casein kinase substrate in neurons protein 1 (Pacsin1) from Mus musculus (Mouse).